Here is a 462-residue protein sequence, read N- to C-terminus: FAD-dependent monooxygenase opaC (462 aa).

N-linked (GlcNAc...) asparagine glycosylation is present at N10. A helical transmembrane segment spans residues 14–34; the sequence is ITVIIIGLGIGGLTAAISCHL. FAD is bound at residue D43. The N-linked (GlcNAc...) asparagine glycan is linked to N60. Residue R115 participates in FAD binding. R193 is an active-site residue. Positions 322 and 335 each coordinate FAD.

Belongs to the paxM FAD-dependent monooxygenase family. It depends on FAD as a cofactor.

The protein resides in the membrane. The protein operates within secondary metabolite biosynthesis. Functionally, FAD-dependent monooxygenase; part of the gene cluster that mediates the biosynthesis of oxepinamides, derivatives of anthranilyl-containing tripeptides that share an oxepin ring and a fused pyrimidinone moiety. The nonribosomal peptide synthetase (NRPS) opaA assembles the quinazolinone core with D-Phe incorporation. The first adenylation domain (A1) of opaA loads and activates anthranilic acid whereas the second A domain (A2) is for activating of L-Phe, which is then converted to D-form by the E domain. The third A domain (A3) is responsible for L-Ile activation and the terminal condensation domain C3 for cyclization and releasing the NRPS product protuboxepin K. The cytochrome P450 monooxygenase opaB then catalyzes alone the oxepin ring formation to convert protuboxepin K into protuboxepin A. The flavoenzyme opaC installs subsequently one hydroxyl group at the oxepin ring, accompanied by double bond migration, to form 15-epi-oxepinamide E. The epimerase opaE changes the D-Phe residue back to L-form, leading to oxepinamide E, which is further methylated at the hydroxyl group at C-12 by the O-methyltransferase OpaF to yield oxepinamide F. This Aspergillus ustus protein is FAD-dependent monooxygenase opaC.